Here is a 66-residue protein sequence, read N- to C-terminus: Large ribosomal subunit protein uL29 (66 aa).

Belongs to the universal ribosomal protein uL29 family.

This chain is Large ribosomal subunit protein uL29, found in Pseudothermotoga lettingae (strain ATCC BAA-301 / DSM 14385 / NBRC 107922 / TMO) (Thermotoga lettingae).